Reading from the N-terminus, the 90-residue chain is Genome polyprotein (90 aa).

Belongs to the potyviridae genome polyprotein family. Post-translationally, genome polyprotein of potyviruses undergoes post-translational proteolytic processing by the main proteinase NIa-pro resulting in the production of at least ten individual proteins. The P1 proteinase and the HC-pro cleave only their respective C-termini autocatalytically. 6K1 is essential for proper proteolytic separation of P3 from CI.

The protein resides in the virion. Involved in aphid transmission, cell-to-cell and systemis movement, encapsidation of the viral RNA and in the regulation of viral RNA amplification. The polypeptide is Genome polyprotein (Gloriosa stripe mosaic virus (GSMV)).